We begin with the raw amino-acid sequence, 253 residues long: Sulfate transporter CysZ (253 aa).

The next 4 membrane-spanning stretches (helical) occupy residues 31 to 51 (FVIL…WWLF), 72 to 92 (LSYL…GYFF), 151 to 171 (IVLL…PVLW), and 222 to 242 (IPVL…AMWV).

It belongs to the CysZ family.

Its subcellular location is the cell inner membrane. Possibly involved in sulfate transport. Its function is as follows. High affinity, high specificity proton-dependent sulfate transporter, which mediates sulfate uptake. Provides the sulfur source for the cysteine synthesis pathway. This Salmonella typhimurium (strain LT2 / SGSC1412 / ATCC 700720) protein is Sulfate transporter CysZ.